The chain runs to 37 residues: Large ribosomal subunit protein bL36 (37 aa).

This sequence belongs to the bacterial ribosomal protein bL36 family.

The chain is Large ribosomal subunit protein bL36 from Parasynechococcus marenigrum (strain WH8102).